Consider the following 486-residue polypeptide: MTKEVRVRYAPSPTGFLHIGGARTALFNYLYAKHHNGKFIVRIEDTDIERNVEGGEASQLDNLKWLGIEYDESIDIGGPYAPYRQMERLDIYKEHAEKLLAQGAAYKCFCSSEKLEASREEQKARGVAAPTYDGTCRHLSAEEVAAKEAAGEPYTIRMRVPENVTYDFEDLVRGQVTFESKDIGDWVIVKANGIPTYNYAVVLDDHFMEISHVFRGEEHLSNTPKQMMIFDAFGWEYPRFGHMTLIINENRKKLSKRDESIIQFVTQYKDLGYLPEAMFNFFALLGWSPEGEEEIFSKEEFIKIFDEKRLSKSPSMFDKQKLTWMNNQYIKKLSLEEVVALSLPHLQKAGLLPDELSAVQHAWATDLIGLYHDQMSFGAEIVELSSLFFKDHIEYDEEAKAVLAGEQVPEVMAAFKAQLEELEEFTPDAVKAAIKAVQKATGHKGKNLFMPIRVVTTGETHGPELPNAICLIGKEKAIDRVEKFAQ.

The 'HIGH' region signature appears at 11 to 21 (PSPTGFLHIGG). Zn(2+) is bound by residues C108, C110, C136, and H138. Residues 253-257 (KLSKR) carry the 'KMSKS' region motif. K256 is a binding site for ATP.

The protein belongs to the class-I aminoacyl-tRNA synthetase family. Glutamate--tRNA ligase type 1 subfamily. Monomer. Zn(2+) is required as a cofactor.

It is found in the cytoplasm. The enzyme catalyses tRNA(Glu) + L-glutamate + ATP = L-glutamyl-tRNA(Glu) + AMP + diphosphate. Its function is as follows. Catalyzes the attachment of glutamate to tRNA(Glu) in a two-step reaction: glutamate is first activated by ATP to form Glu-AMP and then transferred to the acceptor end of tRNA(Glu). The chain is Glutamate--tRNA ligase from Lysinibacillus sphaericus (strain C3-41).